The chain runs to 251 residues: Spermatogenesis-associated protein 46 (251 aa).

The protein resides in the nucleus membrane. In terms of biological role, plays a role in spermiogenesis and fertilization. This chain is Spermatogenesis-associated protein 46 (SPATA46), found in Macaca fascicularis (Crab-eating macaque).